The chain runs to 517 residues: Probable mannosyltransferase KTR7 (517 aa).

The Cytoplasmic segment spans residues methionine 1–glycine 23. Residues phenylalanine 24–alanine 44 traverse the membrane as a helical; Signal-anchor for type II membrane protein segment. The stem region stretch occupies residues lysine 45–tyrosine 85. Over lysine 45–glutamate 517 the chain is Lumenal. Residues serine 86–glutamate 517 are catalytic. Residues asparagine 89 and asparagine 144 are each glycosylated (N-linked (GlcNAc...) asparagine). The Nucleophile role is filled by glutamate 367.

It belongs to the glycosyltransferase 15 family.

It is found in the membrane. Possible glycosyltransferase that transfers an alpha-D-mannosyl residue from GDP-mannose into lipid-linked oligosaccharide, forming an alpha-(1-&gt;2)-D-mannosyl-D-mannose linkage. The protein is Probable mannosyltransferase KTR7 (KTR7) of Saccharomyces cerevisiae (strain ATCC 204508 / S288c) (Baker's yeast).